A 205-amino-acid chain; its full sequence is Ribosomal RNA small subunit methyltransferase G 1 (205 aa).

Residues Gly77, Leu82, 100 to 102 (EKS), 129 to 130 (LE), and Arg138 contribute to the S-adenosyl-L-methionine site.

This sequence belongs to the methyltransferase superfamily. RNA methyltransferase RsmG family.

The protein resides in the cytoplasm. It catalyses the reaction guanosine(527) in 16S rRNA + S-adenosyl-L-methionine = N(7)-methylguanosine(527) in 16S rRNA + S-adenosyl-L-homocysteine. In terms of biological role, specifically methylates the N7 position of guanine in position 527 of 16S rRNA. In Bdellovibrio bacteriovorus (strain ATCC 15356 / DSM 50701 / NCIMB 9529 / HD100), this protein is Ribosomal RNA small subunit methyltransferase G 1.